Consider the following 87-residue polypeptide: Retinal rod rhodopsin-sensitive cGMP 3',5'-cyclic phosphodiesterase subunit gamma (87 aa).

M1 bears the N-acetylmethionine mark. The span at 1-12 (MNLEPPKAEIRS) shows a compositional bias: basic and acidic residues. Residues 1-55 (MNLEPPKAEIRSATRVIGGPVTPRKGPPKFKQRQTRQFKSKPPKKGVQGFGDDIP) form a disordered region. Residues 26 to 44 (GPPKFKQRQTRQFKSKPPK) show a composition bias toward basic residues.

The protein belongs to the rod/cone cGMP-PDE gamma subunit family. Oligomer composed of two catalytic chains (alpha and beta), an inhibitory chain (gamma) and the delta chain.

The catalysed reaction is 3',5'-cyclic GMP + H2O = GMP + H(+). In terms of biological role, participates in processes of transmission and amplification of the visual signal. cGMP-PDEs are the effector molecules in G-protein-mediated phototransduction in vertebrate rods and cones. This Canis lupus familiaris (Dog) protein is Retinal rod rhodopsin-sensitive cGMP 3',5'-cyclic phosphodiesterase subunit gamma (PDE6G).